The primary structure comprises 117 residues: Large ribosomal subunit protein bL20c (117 aa).

This sequence belongs to the bacterial ribosomal protein bL20 family.

It is found in the plastid. It localises to the chloroplast. Binds directly to 23S ribosomal RNA and is necessary for the in vitro assembly process of the 50S ribosomal subunit. It is not involved in the protein synthesizing functions of that subunit. The protein is Large ribosomal subunit protein bL20c of Drimys granadensis.